Reading from the N-terminus, the 286-residue chain is Pantothenate synthetase (286 aa).

30–37 (MGNLHAGH) contacts ATP. H37 serves as the catalytic Proton donor. Q61 is a binding site for (R)-pantoate. Q61 provides a ligand contact to beta-alanine. 149-152 (GEKD) contributes to the ATP binding site. Q155 contributes to the (R)-pantoate binding site. Residues V178 and 186–189 (MSSR) each bind ATP.

The protein belongs to the pantothenate synthetase family. As to quaternary structure, homodimer.

The protein resides in the cytoplasm. It catalyses the reaction (R)-pantoate + beta-alanine + ATP = (R)-pantothenate + AMP + diphosphate + H(+). Its pathway is cofactor biosynthesis; (R)-pantothenate biosynthesis; (R)-pantothenate from (R)-pantoate and beta-alanine: step 1/1. Catalyzes the condensation of pantoate with beta-alanine in an ATP-dependent reaction via a pantoyl-adenylate intermediate. The protein is Pantothenate synthetase of Methylococcus capsulatus (strain ATCC 33009 / NCIMB 11132 / Bath).